Reading from the N-terminus, the 1338-residue chain is P-type sodium-transporting ATPase4 (1338 aa).

Residues 1–106 are disordered; it reads MAARASADKL…KSISSVSQMH (106 aa). The segment covering 55 to 69 has biased composition (basic and acidic residues); the sequence is AEEKVAGHDGESPRR. A compositionally biased stretch (polar residues) spans 91-104; that stretch reads GHSQLGKSISSVSQ. The next 8 helical transmembrane spans lie at 229-249, 255-275, 418-438, 456-476, 985-1005, 1068-1088, 1261-1281, and 1288-1308; these read IFIQQFLSPVVLLLLVAAIAS, WVEGAAIFIIVTLNASLATYM, LGGMIGLIAICVLIIVVVVAI, IVLVAVGFAVSSIPEGLPMVV, FVCFLLGTNIGEIIYLTIAIA, IFEAGCVLMSLALGLYLCTGV, MHLACSISATLTSLLTIVPGI, and CALPWYLYLFAIGCGFVNLIL.

It belongs to the cation transport ATPase (P-type) (TC 3.A.3) family.

Its subcellular location is the cell membrane. It catalyses the reaction Na(+)(in) + ATP + H2O = Na(+)(out) + ADP + phosphate + H(+). Its activity is regulated as follows. Inhibited by cipargamin, a synthetic spiroindolone. Inhibited by pyrazoleamide PA21A050, structurally unrelated to the spiroindolones. Inhibited by (+)-SJ733, a dihydroisoquinolone compound. Functionally, sodium-exporting ATPase. Required for the extrusion of Na(+) from the parasites to maintain a low cytosolic concentration of Na(+). Required for maintaining the viability of extracellular parasites but not for intracellular growth, egress or invasion. Involved in parasite virulence. The chain is P-type sodium-transporting ATPase4 from Toxoplasma gondii (strain ATCC 50861 / VEG).